A 248-amino-acid chain; its full sequence is Octanoyltransferase (248 aa).

One can recognise a BPL/LPL catalytic domain in the interval 53 to 238 (ADTGDEIWVV…NLDGASAAAD (186 aa)). Substrate contacts are provided by residues 93–100 (RGGQITYH), 165–167 (ALG), and 178–180 (GLS). C196 acts as the Acyl-thioester intermediate in catalysis.

The protein belongs to the LipB family.

Its subcellular location is the cytoplasm. The catalysed reaction is octanoyl-[ACP] + L-lysyl-[protein] = N(6)-octanoyl-L-lysyl-[protein] + holo-[ACP] + H(+). It functions in the pathway protein modification; protein lipoylation via endogenous pathway; protein N(6)-(lipoyl)lysine from octanoyl-[acyl-carrier-protein]: step 1/2. Catalyzes the transfer of endogenously produced octanoic acid from octanoyl-acyl-carrier-protein onto the lipoyl domains of lipoate-dependent enzymes. Lipoyl-ACP can also act as a substrate although octanoyl-ACP is likely to be the physiological substrate. This is Octanoyltransferase from Burkholderia orbicola (strain MC0-3).